The chain runs to 282 residues: Protein canopy homolog 3 (282 aa).

An N-terminal signal peptide occupies residues 1-33 (MEPLPEPASGPRPRPHRLLLLSLLLLLLPLLPA). The region spanning 53–275 (SKCEVCKYVA…EGIQKASPLT (223 aa)) is the Saposin B-type domain. Disulfide bonds link C55–C212, C58–C200, and C110–C172. N159 carries N-linked (GlcNAc...) asparagine glycosylation. The stretch at 159–185 (NETSAEVADLKKQCDVLVEEFEEVIED) forms a coiled coil. The disordered stretch occupies residues 221-282 (KGDTAALGGK…PLTHSPPDEL (62 aa)). A compositionally biased stretch (acidic residues) spans 255–266 (DLDGDPSPEEDE).

The protein belongs to the canopy family. Interacts with HSP90B1; this interaction is disrupted in the presence of ATP. Interacts with TLR1, TLR2, TLR4 and TLR9.

It is found in the endoplasmic reticulum. Functionally, toll-like receptor (TLR)-specific co-chaperone for HSP90B1. Required for proper TLR folding, except that of TLR3, and hence controls TLR exit from the endoplasmic reticulum. Consequently, required for both innate and adaptive immune responses. The sequence is that of Protein canopy homolog 3 (CNPY3) from Bos taurus (Bovine).